Reading from the N-terminus, the 386-residue chain is Probable Xaa-Pro aminopeptidase PMAA_074180 (386 aa).

Positions 160, 171, 311, and 350 each coordinate Mn(2+).

This sequence belongs to the peptidase M24B family. Requires Mn(2+) as cofactor.

The catalysed reaction is Release of any N-terminal amino acid, including proline, that is linked to proline, even from a dipeptide or tripeptide.. In terms of biological role, catalyzes the removal of a penultimate prolyl residue from the N-termini of peptides. This Talaromyces marneffei (strain ATCC 18224 / CBS 334.59 / QM 7333) (Penicillium marneffei) protein is Probable Xaa-Pro aminopeptidase PMAA_074180.